Reading from the N-terminus, the 350-residue chain is Calcium uniporter protein, mitochondrial (350 aa).

The N-terminal 49 residues, 1-49, are a transit peptide targeting the mitochondrion; the sequence is MAAAAGRSLLLLLCSRGGGGGAGGCGALTAGCFPGLGVSRHRPHQQHRT. The Mitochondrial matrix portion of the chain corresponds to 50–232; the sequence is AHQRPASWQS…ISRKAEKRTT (183 aa). 2 positions are modified to phosphoserine; by CaMK2: S56 and S91. The tract at residues 74 to 164 is N-terminal MCU domain; that stretch reads VTVVYQNGLP…LTYHVRPPKR (91 aa). C96 is subject to S-glutathionyl cysteine. A coiled-coil region spans residues 191–220; the sequence is IEQHQLNKERELVERLEDLKQQLAPLEKVR. The helical transmembrane segment at 233–256 threads the bilayer; it reads LVLWGGLAYMATQFGILARLTWWE. The Mitochondrial intermembrane portion of the chain corresponds to 257 to 264; that stretch reads YSWDIMEP. Residues 259–267 carry the Selectivity filter motif; sequence WDIMEPVTY. A Ca(2+)-binding site is contributed by E263. Residues 265 to 282 traverse the membrane as a helical segment; the sequence is VTYFITYGSAMAMYAYFV. Topologically, residues 283–350 are mitochondrial matrix; the sequence is MTRQEYVYPE…LPLRQIGEKE (68 aa). The segment at 284–289 is juxtamembrane helix; the sequence is TRQEYV. Positions 310–338 form a coiled coil; that stretch reads RFDLEKYNQLKDAIAQAEMDLKRLRDPLQ. The residue at position 331 (K331) is an N6-acetyllysine.

The protein belongs to the MCU (TC 1.A.77) family. Homotetramer. Component of the uniplex complex, composed of MCU, EMRE/SMDT1, MICU1 and MICU2 (or MICU3) in a 4:4:1:1 stoichiometry. Interacts with CCDC109B/MCUB; this inhibits channel activity. Interacts with MCUR1. Interactions with MICU1 and MCUR1 are mutually exclusive. Interacts with SLC25A23. Post-translationally, phosphorylation by CaMK2 in heart leads to increased MCU current. The regulation of MCU by CaMK2 is however subject to discussion: another group was unable to reproduce these results. Phosphorylated on tyrosines by PTK2B/PYK2, promoting oligomerization. Glutathionylation at Cys-96 in response to reactive oxygen species (ROS) promotes MCU higher-order assembly, leading to constitutive activation of the MCU channel and mitochondrial calcium overload. In terms of processing, undergoes proteolytic degradation by SPG7. As to expression, detected in heart muscle (at protein level). Expressed in skeletal muscle, heart, kidney, liver, brain, lung, white fat and spleen.

The protein localises to the mitochondrion inner membrane. It carries out the reaction Ca(2+)(in) = Ca(2+)(out). Its activity is regulated as follows. MCU channel activity is regulated by the heterodimer composed of MICU1 and either MICU2 or MICU3, which act as calcium-sensors. At low calcium levels, MICU1 occludes the pore of the MCU channel, preventing mitochondrial calcium uptake. At higher calcium levels, calcium-binding to MICU1 and MICU2 (or MICU3) induces a conformational change that weakens MCU-MICU1 interactions and moves the MICU1-MICU2 heterodimer away from the pore, allowing calcium permeation through the channel. MCU channel activity is gated by EMRE/SMDT1 via the juxtamembrane helix loop. Inhibited by ruthenium red or its derivative Ru360. Functionally, channel-forming and calcium-conducting subunit of the mitochondrial inner membrane calcium uniporter complex (uniplex), which mediates calcium uptake into the mitochondrial matrix. MCU channel activity is regulated by the calcium-sensor subunits of the uniplex MICU1 and MICU2 (or MICU3). Mitochondrial calcium homeostasis plays key roles in cellular physiology and regulates ATP production, cytoplasmic calcium signals and activation of cell death pathways. Involved in buffering the amplitude of systolic calcium rises in cardiomyocytes. While dispensable for baseline homeostatic cardiac function, acts as a key regulator of short-term mitochondrial calcium loading underlying a 'fight-or-flight' response during acute stress: acts by mediating a rapid increase of mitochondrial calcium in pacemaker cells. Participates in mitochondrial permeability transition during ischemia-reperfusion injury. Mitochondrial calcium uptake in skeletal muscle cells is involved in muscle size in adults. Regulates synaptic vesicle endocytosis kinetics in central nerve terminal. Regulates glucose-dependent insulin secretion in pancreatic beta-cells by regulating mitochondrial calcium uptake. Involved in antigen processing and presentation. In Mus musculus (Mouse), this protein is Calcium uniporter protein, mitochondrial.